A 291-amino-acid polypeptide reads, in one-letter code: Lactoylglutathione lyase (291 aa).

VOC domains lie at 24-149 (RLLH…LIQR) and 155-283 (PLCQ…LVDN). Substrate-binding residues include Arg31, Asn82, and His96. His96 is an active-site residue. Glu145 functions as the Proton donor/acceptor in the catalytic mechanism. Glu145 contacts Ni(2+). Catalysis depends on residues Gln158 and Glu209. Ni(2+) is bound at residue Glu209.

The protein belongs to the glyoxalase I family. Monomer. Ni(2+) is required as a cofactor. Phosphorylated after gibberellin treatment. Expressed in callus, stem, leaves, panicles and maturing seeds (at protein level).

The enzyme catalyses (R)-S-lactoylglutathione = methylglyoxal + glutathione. Its pathway is secondary metabolite metabolism; methylglyoxal degradation; (R)-lactate from methylglyoxal: step 1/2. In terms of biological role, catalyzes the conversion of hemimercaptal, formed from methylglyoxal and glutathione, to S-lactoylglutathione. Involved in the detoxifiation of methylglyoxal. Can functionally complement growth defect of a yeast mutant lacking GLY I. Involved in abiotic stress response. Over-expression of GLYI-11 in tobacco increases tolerance to osmotic, oxidative and salt stresses. In Oryza sativa subsp. japonica (Rice), this protein is Lactoylglutathione lyase.